The sequence spans 445 residues: Argininosuccinate synthase (445 aa).

Residues 17–25 and alanine 43 each bind ATP; that span reads AFSGGLDTS. An L-citrulline-binding site is contributed by tyrosine 99. ATP contacts are provided by glycine 129 and threonine 131. L-aspartate is bound by residues threonine 131, asparagine 135, and aspartate 136. Asparagine 135 serves as a coordination point for L-citrulline. Aspartate 136 contributes to the ATP binding site. Arginine 139 and serine 192 together coordinate L-citrulline. Residue aspartate 194 coordinates ATP. Residues threonine 201, glutamate 203, and glutamate 280 each coordinate L-citrulline.

The protein belongs to the argininosuccinate synthase family. Type 2 subfamily. In terms of assembly, homotetramer.

It is found in the cytoplasm. It catalyses the reaction L-citrulline + L-aspartate + ATP = 2-(N(omega)-L-arginino)succinate + AMP + diphosphate + H(+). It participates in amino-acid biosynthesis; L-arginine biosynthesis; L-arginine from L-ornithine and carbamoyl phosphate: step 2/3. The sequence is that of Argininosuccinate synthase from Gemmatimonas aurantiaca (strain DSM 14586 / JCM 11422 / NBRC 100505 / T-27).